The sequence spans 332 residues: D-alanine--D-alanine ligase (332 aa).

Positions 112 to 312 (KRIWRADGLP…YPDLCLRILA (201 aa)) constitute an ATP-grasp domain. Residue 138–193 (FQELGAPMIVKPSREGSTIGLTKVTSLGQCEQAYRLAAQHDPEVLCEQFIDGDETT) coordinates ATP. Residues Asp265, Glu279, and Asn281 each contribute to the Mg(2+) site.

Belongs to the D-alanine--D-alanine ligase family. Requires Mg(2+) as cofactor. The cofactor is Mn(2+).

The protein resides in the cytoplasm. It catalyses the reaction 2 D-alanine + ATP = D-alanyl-D-alanine + ADP + phosphate + H(+). Its pathway is cell wall biogenesis; peptidoglycan biosynthesis. Functionally, cell wall formation. The polypeptide is D-alanine--D-alanine ligase (Acidovorax ebreus (strain TPSY) (Diaphorobacter sp. (strain TPSY))).